The chain runs to 486 residues: CUGBP Elav-like family member 5 (486 aa).

Positions 1-11 (MARLTEREARR) are enriched in basic and acidic residues. Residues 1 to 39 (MARLTEREARRQQQQHPPQQQQPRACPMSGPEPPAQQSD) are disordered. The segment covering 12-24 (QQQQHPPQQQQPR) has biased composition (low complexity). RRM domains follow at residues 47–128 (IKLF…PADS), 135–215 (RKLF…FADT), and 401–479 (CNLF…LKRP).

Belongs to the CELF/BRUNOL family.

It is found in the nucleus. It localises to the cytoplasm. RNA-binding protein that may be implicated in the regulation of pre-mRNA alternative splicing. This Xenopus tropicalis (Western clawed frog) protein is CUGBP Elav-like family member 5 (celf5).